Here is a 1172-residue protein sequence, read N- to C-terminus: Pesticidal crystal protein Cry1Ha (1172 aa).

This sequence belongs to the delta endotoxin family.

In terms of biological role, promotes colloidosmotic lysis by binding to the midgut epithelial cells of insects. This Bacillus thuringiensis protein is Pesticidal crystal protein Cry1Ha (cry1Ha).